Consider the following 904-residue polypeptide: Phosphoenolpyruvate carboxylase (904 aa).

The tract at residues 52–71 (ISRRESDAPPSTLSEQLTGR) is disordered. A compositionally biased stretch (polar residues) spans 60–70 (PPSTLSEQLTG). Residues His-151 and Lys-570 contribute to the active site.

The protein belongs to the PEPCase type 1 family. It depends on Mg(2+) as a cofactor.

The catalysed reaction is oxaloacetate + phosphate = phosphoenolpyruvate + hydrogencarbonate. Its function is as follows. Forms oxaloacetate, a four-carbon dicarboxylic acid source for the tricarboxylic acid cycle. In Xanthomonas euvesicatoria pv. vesicatoria (strain 85-10) (Xanthomonas campestris pv. vesicatoria), this protein is Phosphoenolpyruvate carboxylase.